A 153-amino-acid chain; its full sequence is Riboflavin synthase (153 aa).

It belongs to the DMRL synthase family.

It catalyses the reaction 2 6,7-dimethyl-8-(1-D-ribityl)lumazine + H(+) = 5-amino-6-(D-ribitylamino)uracil + riboflavin. It participates in cofactor biosynthesis; riboflavin biosynthesis; riboflavin from 2-hydroxy-3-oxobutyl phosphate and 5-amino-6-(D-ribitylamino)uracil: step 2/2. The chain is Riboflavin synthase (ribC) from Archaeoglobus fulgidus (strain ATCC 49558 / DSM 4304 / JCM 9628 / NBRC 100126 / VC-16).